Consider the following 473-residue polypeptide: ATP synthase subunit beta (473 aa).

Residue 158–165 coordinates ATP; that stretch reads GGAGVGKT.

Belongs to the ATPase alpha/beta chains family. In terms of assembly, F-type ATPases have 2 components, CF(1) - the catalytic core - and CF(0) - the membrane proton channel. CF(1) has five subunits: alpha(3), beta(3), gamma(1), delta(1), epsilon(1). CF(0) has three main subunits: a(1), b(2) and c(9-12). The alpha and beta chains form an alternating ring which encloses part of the gamma chain. CF(1) is attached to CF(0) by a central stalk formed by the gamma and epsilon chains, while a peripheral stalk is formed by the delta and b chains.

It is found in the cell membrane. The catalysed reaction is ATP + H2O + 4 H(+)(in) = ADP + phosphate + 5 H(+)(out). In terms of biological role, produces ATP from ADP in the presence of a proton gradient across the membrane. The catalytic sites are hosted primarily by the beta subunits. This is ATP synthase subunit beta from Geobacillus thermodenitrificans (strain NG80-2).